We begin with the raw amino-acid sequence, 155 residues long: MAALSSAAVSVPSFAAATPMRSSRSSRMVVRASLGKKAASAAVAMAAGAMLLGGSAMAQDVLLGANGGVLVFEPNDFSVKAGETITFKNNAGYPHNVVFDEDAVPSGVDVSKISQEEYLTAPGETFSVTLTVPGTYGFYCEPHAGAGMVGKVTVN.

The N-terminal 58 residues, 1–58, are a transit peptide targeting the chloroplast; it reads MAALSSAAVSVPSFAAATPMRSSRSSRMVVRASLGKKAASAAVAMAAGAMLLGGSAMA. The Plastocyanin-like domain occupies 59–155; that stretch reads QDVLLGANGG…AGMVGKVTVN (97 aa). 4 residues coordinate Cu cation: His-95, Cys-140, His-143, and Met-148.

Belongs to the plastocyanin family. Requires Cu(2+) as cofactor.

It is found in the plastid. Its subcellular location is the chloroplast thylakoid membrane. Participates in electron transfer between P700 and the cytochrome b6-f complex in photosystem I. This Hordeum vulgare (Barley) protein is Plastocyanin, chloroplastic (PETE).